The sequence spans 205 residues: Proteasome subunit beta type-3 (205 aa).

This sequence belongs to the peptidase T1B family. In terms of assembly, the 26S proteasome consists of a 20S proteasome core and two 19S regulatory subunits. The 20S proteasome core is composed of 28 subunits that are arranged in four stacked rings, resulting in a barrel-shaped structure. The two end rings are each formed by seven alpha subunits, and the two central rings are each formed by seven beta subunits. The catalytic chamber with the active sites is on the inside of the barrel.

It localises to the cytoplasm. The protein localises to the nucleus. In terms of biological role, non-catalytic component of the proteasome, a multicatalytic proteinase complex which is characterized by its ability to cleave peptides with Arg, Phe, Tyr, Leu, and Glu adjacent to the leaving group at neutral or slightly basic pH. The proteasome has an ATP-dependent proteolytic activity. The chain is Proteasome subunit beta type-3 (PSB3) from Trypanosoma brucei brucei.